The chain runs to 533 residues: D-3-phosphoglycerate dehydrogenase (533 aa).

A2 carries the post-translational modification N-acetylalanine. S14 carries the phosphoserine modification. K21 carries the N6-acetyllysine; alternate modification. K21 is covalently cross-linked (Glycyl lysine isopeptide (Lys-Gly) (interchain with G-Cter in SUMO1); alternate). A Glycyl lysine isopeptide (Lys-Gly) (interchain with G-Cter in SUMO2); alternate cross-link involves residue K21. At K58 the chain carries N6-acetyllysine. NAD(+)-binding positions include T78, 155-156 (RI), D175, T207, 234-236 (CAR), and D260. A Phosphothreonine modification is found at T78. R236 is a catalytic residue. E265 is a catalytic residue. H283 acts as the Proton donor in catalysis. NAD(+) is bound at residue 283–286 (HLGA).

Belongs to the D-isomer specific 2-hydroxyacid dehydrogenase family. As to quaternary structure, homotetramer.

It catalyses the reaction (2R)-3-phosphoglycerate + NAD(+) = 3-phosphooxypyruvate + NADH + H(+). It carries out the reaction (R)-2-hydroxyglutarate + NAD(+) = 2-oxoglutarate + NADH + H(+). The catalysed reaction is (S)-malate + NAD(+) = oxaloacetate + NADH + H(+). The protein operates within amino-acid biosynthesis; L-serine biosynthesis; L-serine from 3-phospho-D-glycerate: step 1/3. In terms of biological role, catalyzes the reversible oxidation of 3-phospho-D-glycerate to 3-phosphonooxypyruvate, the first step of the phosphorylated L-serine biosynthesis pathway. Also catalyzes the reversible oxidation of 2-hydroxyglutarate to 2-oxoglutarate and the reversible oxidation of (S)-malate to oxaloacetate. This chain is D-3-phosphoglycerate dehydrogenase (PHGDH), found in Pan troglodytes (Chimpanzee).